Reading from the N-terminus, the 944-residue chain is MAAIAAVAARRRRSWLSLVLAYLGVCLGITLAVDRSNFKTCDESSFCKRQRSIRPGLSPYRALLDTLQLGPDALTVHLIHEVTKVLLVLELQGLQKNMTRIRIDELEPRRPRYRVPDVLVADPPTARLSVSGRDDNSVELTVAEGPYKIILTAQPFRLDLLEDRSLLLSVNARGLMAFEHQRAPRVPQESKDPAEGNGAQPEATPGDGDKPEETQEKAEKDEPGAWEETFKTHSDSKPYGPTSVGLDFSLPGMEHVYGIPEHADSLRLKVTEGGEPYRLYNLDVFQYELNNPMALYGSVPVLLAHSFHRDLGIFWLNAAETWVDISSNTAGKTLFGKMLDYLQGSGETPQTDIRWMSESGIIDVFLMLGPSVFDVFRQYASLTGTQALPPLFSLGYHQSRWNYRDEADVLEVDQGFDDHNMPCDVIWLDIEHADGKRYFTWDPTRFPQPLNMLEHLASKRRKLVAIVDPHIKVDSGYRVHEELRNHGLYVKTRDGSDYEGWCWPGSASYPDFTNPRMRAWWSNMFSFDNYEGSAPNLYVWNDMNEPSVFNGPEVTMLKDAVHYGGWEHRDIHNIYGLYVHMATADGLIQRSGGIERPFVLSRAFFSGSQRFGAVWTGDNTAEWDHLKISIPMCLSLALVGLSFCGADVGGFFKNPEPELLVRWYQMGAYQPFFRAHAHLDTGRREPWLLASQYQDAIRDALFQRYSLLPFWYTLFYQAHKEGFPVMRPLWVQYPEDMSTFSIEDQFMLGDALLIHPVSDAGAHGVQVYLPGQEEVWYDIQSYQKHHGPQTLYLPVTLSSIPVFQRGGTIVPRWMRVRRSSDCMKDDPITLFVALSPQGTAQGELFLDDGHTFNYQTRHEFLLRRFSFSGSTLVSSSADPKGHLETPIWIERVVIMGAGKPAAVVLQTKGSPESRLSFQHDPETSVLILRKPGVSVASDWSIHLR.

Positions 1–32 are cleaved as a signal peptide; that stretch reads MAAIAAVAARRRRSWLSLVLAYLGVCLGITLA. An intrachain disulfide couples Cys41 to Cys47. At Ser52 the chain carries Phosphoserine. Residue Asn97 is glycosylated (N-linked (GlcNAc...) asparagine). Positions 180–238 are disordered; sequence HQRAPRVPQESKDPAEGNGAQPEATPGDGDKPEETQEKAEKDEPGAWEETFKTHSDSKP. Positions 207–236 are enriched in basic and acidic residues; sequence DGDKPEETQEKAEKDEPGAWEETFKTHSDS. Asp283 and Asp429 together coordinate substrate. Residue Asp542 is the Nucleophile of the active site. Substrate is bound at residue Arg602. Catalysis depends on Asp618, which acts as the Proton donor. The cysteines at positions 633 and 644 are disulfide-linked. Residue His676 participates in substrate binding.

It belongs to the glycosyl hydrolase 31 family. Heterodimer of a catalytic alpha subunit (GANAB) and a beta subunit (PRKCSH). Binds glycosylated PTPRC.

The protein resides in the endoplasmic reticulum. The protein localises to the golgi apparatus. It localises to the melanosome. The catalysed reaction is N(4)-(alpha-D-Glc-(1-&gt;3)-alpha-D-Man-(1-&gt;2)-alpha-D-Man-(1-&gt;2)-alpha-D-Man-(1-&gt;3)-[alpha-D-Man-(1-&gt;2)-alpha-D-Man-(1-&gt;3)-[alpha-D-Man-(1-&gt;2)-alpha-D-Man-(1-&gt;6)]-alpha-D-Man-(1-&gt;6)]-beta-D-Man-(1-&gt;4)-beta-D-GlcNAc-(1-&gt;4)-beta-D-GlcNAc)-L-asparaginyl-[protein] + H2O = N(4)-(alpha-D-Man-(1-&gt;2)-alpha-D-Man-(1-&gt;2)-alpha-D-Man-(1-&gt;3)-[alpha-D-Man-(1-&gt;2)-alpha-D-Man-(1-&gt;3)-[alpha-D-Man-(1-&gt;2)-alpha-D-Man-(1-&gt;6)]-alpha-D-Man-(1-&gt;6)]-beta-D-Man-(1-&gt;4)-beta-D-GlcNAc-(1-&gt;4)-beta-D-GlcNAc)-L-asparaginyl-[protein] (N-glucan mannose isomer 9A1,2,3B1,2,3) + beta-D-glucose. It carries out the reaction N(4)-(alpha-D-Glc-(1-&gt;3)-alpha-D-Glc-(1-&gt;3)-alpha-D-Man-(1-&gt;2)-alpha-D-Man-(1-&gt;2)-alpha-D-Man-(1-&gt;3)-[alpha-D-Man-(1-&gt;2)-alpha-D-Man-(1-&gt;3)-[alpha-D-Man-(1-&gt;2)-alpha-D-Man-(1-&gt;6)]-alpha-D-Man-(1-&gt;6)]-beta-D-Man-(1-&gt;4)-beta-D-GlcNAc-(1-&gt;4)-beta-D-GlcNAc)-L-asparaginyl-[protein] + H2O = N(4)-(alpha-D-Glc-(1-&gt;3)-alpha-D-Man-(1-&gt;2)-alpha-D-Man-(1-&gt;2)-alpha-D-Man-(1-&gt;3)-[alpha-D-Man-(1-&gt;2)-alpha-D-Man-(1-&gt;3)-[alpha-D-Man-(1-&gt;2)-alpha-D-Man-(1-&gt;6)]-alpha-D-Man-(1-&gt;6)]-beta-D-Man-(1-&gt;4)-beta-D-GlcNAc-(1-&gt;4)-beta-D-GlcNAc)-L-asparaginyl-[protein] + beta-D-glucose. Its pathway is glycan metabolism; N-glycan metabolism. Its function is as follows. Catalytic subunit of glucosidase II that cleaves sequentially the 2 innermost alpha-1,3-linked glucose residues from the Glc(2)Man(9)GlcNAc(2) oligosaccharide precursor of immature glycoproteins. Required for PKD1/Polycystin-1 and PKD2/Polycystin-2 maturation and localization to the cell surface and cilia. The sequence is that of Neutral alpha-glucosidase AB from Mus musculus (Mouse).